The primary structure comprises 1059 residues: Tyrosine-protein kinase-like otk (1059 aa).

The first 23 residues, 1 to 23 (MDMLMMWSICLFVCIFMAPFSCG), serve as a signal peptide directing secretion. The Extracellular portion of the chain corresponds to 24 to 597 (SGSSSRFIQV…GDGGFLATRA (574 aa)). 5 Ig-like C2-type domains span residues 28–112 (SRFI…REAS), 113–202 (PTAK…RVMS), 258–377 (PEGL…LAIN), 380–475 (PGIL…VSIN), and 480–570 (PKFS…AVLT). N-linked (GlcNAc...) asparagine glycosylation occurs at Asn42. 4 disulfide bridges follow: Cys49-Cys99, Cys141-Cys191, Cys283-Cys366, and Cys411-Cys459. 7 N-linked (GlcNAc...) asparagine glycosylation sites follow: Asn348, Asn429, Asn441, Asn456, Asn469, Asn524, and Asn536. Cys502 and Cys554 are oxidised to a cystine. A helical transmembrane segment spans residues 598–618 (VLITMTVALAYIVLVVGLMLW). Over 619–1059 (CRYRRQARKA…ALSKAMQNSE (441 aa)) the chain is Cytoplasmic. Residues 639 to 695 (GGEQAGGEGSTSGNPKASEQEPCLGKQQRNGRNGKSKSNGDPQKSDDTACSQQSRAS) form a disordered region. Over residues 665 to 693 (QQRNGRNGKSKSNGDPQKSDDTACSQQSR) the composition is skewed to polar residues. Ser698 is subject to Phosphoserine. The Protein kinase; inactive domain maps to 712 to 1055 (LSELIQIGRG…QLGAALSKAM (344 aa)). The disordered stretch occupies residues 739 to 781 (AQANDKDSDNDKQHSNSENGSGGSSGSTTLSTLNEKRRSKTSM). Residues 742–753 (NDKDSDNDKQHS) are compositionally biased toward basic and acidic residues.

It belongs to the protein kinase superfamily. Tyr protein kinase family. Insulin receptor subfamily. Interacts with plexA; component of a receptor complex that mediates the repulsive signaling in response to Semaphorin ligands.

The protein localises to the cell membrane. Its function is as follows. Acts as a calcium-dependent, homophilic cell adhesion molecule that regulates neural recognition during the development of the nervous system. Component of the repulsive Plexin signaling response to regulate motor axon guidance at the embryonic stage. Also component of a receptor complex that is required in the adult visual system to innervate the lamina layer; specific targeting of R1-R6 axons. This is Tyrosine-protein kinase-like otk from Drosophila willistoni (Fruit fly).